The following is a 348-amino-acid chain: CCN family member 2 (348 aa).

An N-terminal signal peptide occupies residues M1–G25. One can recognise an IGFBP N-terminal domain in the interval Q26–K97. Intrachain disulfides connect C28/C53, C32/C55, C34/C56, C42/C59, C67/C81, and C73/C94. Positions A100–D166 constitute a VWFC domain. The TSP type-1 domain occupies N197 to E242. Residues E246–A348 are heparin-binding. Cystine bridges form between C255–C292, C272–C306, C283–C322, C286–C324, and C291–C328. In terms of domain architecture, CTCK spans C255 to P329.

Belongs to the CCN family. Monomer. Interacts with TSKU. In terms of tissue distribution, testis, spleen, kidney, lung, heart, and brain (lowest level in testis and highest in lung).

It is found in the secreted. The protein resides in the extracellular space. Its subcellular location is the extracellular matrix. Functionally, major connective tissue mitoattractant secreted by vascular endothelial cells. Promotes proliferation and differentiation of chondrocytes. Is involved in the stimulation of osteoblast differentiation and has a critical role in osteogenesis. Mediates heparin- and divalent cation-dependent cell adhesion in many cell types including fibroblasts, myofibroblasts, endothelial and epithelial cells. Enhances fibroblast growth factor-induced DNA synthesis. The polypeptide is CCN family member 2 (Mus musculus (Mouse)).